The primary structure comprises 883 residues: Alanine--tRNA ligase (883 aa).

Positions 563, 567, 673, and 677 each coordinate Zn(2+).

It belongs to the class-II aminoacyl-tRNA synthetase family. Requires Zn(2+) as cofactor.

Its subcellular location is the cytoplasm. The catalysed reaction is tRNA(Ala) + L-alanine + ATP = L-alanyl-tRNA(Ala) + AMP + diphosphate. Its function is as follows. Catalyzes the attachment of alanine to tRNA(Ala) in a two-step reaction: alanine is first activated by ATP to form Ala-AMP and then transferred to the acceptor end of tRNA(Ala). Also edits incorrectly charged Ser-tRNA(Ala) and Gly-tRNA(Ala) via its editing domain. The sequence is that of Alanine--tRNA ligase from Caulobacter sp. (strain K31).